A 129-amino-acid chain; its full sequence is C-type natriuretic peptide 1 (129 aa).

The first 24 residues, 1–24 (MSYKRGTCLGFIMLLMVSHHHTKG), serve as a signal peptide directing secretion. A propeptide spanning residues 25 to 107 (KPLSSLQNLS…SRRYRQRNKK (83 aa)) is cleaved from the precursor. C113 and C129 are oxidised to a cystine.

The protein belongs to the natriuretic peptide family.

The protein resides in the secreted. Hormone which plays a role in endochondral ossification through regulation of cartilaginous growth plate chondrocytes proliferation and differentiation. May also be vasoactive and natriuretic. May be important for freshwater adaptation. The sequence is that of C-type natriuretic peptide 1 from Aquarana catesbeiana (American bullfrog).